A 290-amino-acid chain; its full sequence is MTSTNSRKSAISKSWPAPAKLNLFLHVTGQRADGYHELQTLFQFIDHCDYLDFHITDTPDLILHSTMSDSVADSDNLILKAAKSLKRYTQYEGGAHIWLEKLLPMGGGLGGGSSDAATTLVALNALWKTNISPNKLAEIGLTLGADVPVFINGLSAFAEGVGEKLITVQPPESWYLVIVPDVHVSTQAVFQHPDLPRNTPKLDMSSLMTQQWSNDCQKLVTTKHPQVANALSWLVEYAPSRMTGTGACVFGEFTHSQQALDALAKLPADMQGFVAKGMNKSPLQIRLEQL.

Residue lysine 20 is part of the active site. Residue 104–114 coordinates ATP; the sequence is PMGGGLGGGSS. Residue aspartate 146 is part of the active site.

This sequence belongs to the GHMP kinase family. IspE subfamily.

The catalysed reaction is 4-CDP-2-C-methyl-D-erythritol + ATP = 4-CDP-2-C-methyl-D-erythritol 2-phosphate + ADP + H(+). Its pathway is isoprenoid biosynthesis; isopentenyl diphosphate biosynthesis via DXP pathway; isopentenyl diphosphate from 1-deoxy-D-xylulose 5-phosphate: step 3/6. Its function is as follows. Catalyzes the phosphorylation of the position 2 hydroxy group of 4-diphosphocytidyl-2C-methyl-D-erythritol. The sequence is that of 4-diphosphocytidyl-2-C-methyl-D-erythritol kinase from Shewanella frigidimarina (strain NCIMB 400).